A 142-amino-acid chain; its full sequence is UPF0332 protein PH1297 (142 aa).

The protein belongs to the UPF0332 family.

This chain is UPF0332 protein PH1297, found in Pyrococcus horikoshii (strain ATCC 700860 / DSM 12428 / JCM 9974 / NBRC 100139 / OT-3).